We begin with the raw amino-acid sequence, 289 residues long: Cyclin-dependent kinase inhibitor 4 (289 aa).

3 disordered regions span residues 1 to 31 (MGKYIRKSKIDGAGAGAGGGGGGGGGGESSI), 56 to 160 (LQQQ…VSES), and 227 to 248 (SESNQREDSLSRSHRRRPTTPE). The segment covering 13–28 (AGAGAGGGGGGGGGGE) has biased composition (gly residues). Residues 56–80 (LQQQQQRCLLQKPSSPSSLPPTSAS) show a composition bias toward low complexity. A compositionally biased stretch (polar residues) spans 134–144 (CGRNPNPRSNL).

This sequence belongs to the CDI family. ICK/KRP subfamily. As to quaternary structure, specifically interacts with CDKA-1, but not with CDKB1-1. Interacts with CYCD4-1. Binds to FBL17. As to expression, expressed in leaves and flowers and at lower levels in roots.

The protein resides in the nucleus. It is found in the nucleoplasm. Its function is as follows. Binds and inhibits CYCD2-1/CDKA-1 complex kinase activity. May target specifically CDKA-1. This chain is Cyclin-dependent kinase inhibitor 4 (KRP4), found in Arabidopsis thaliana (Mouse-ear cress).